The primary structure comprises 300 residues: Tyrosine recombinase XerC (300 aa).

In terms of domain architecture, Core-binding (CB) spans 2–88 (IQEGKLEQQF…SLRSFYTFLL (87 aa)). The Tyr recombinase domain occupies 109 to 294 (RLPKFFYSEE…TKEHLKSTYM (186 aa)). Residues R150, K174, H246, R249, and H272 contribute to the active site. Y281 acts as the O-(3'-phospho-DNA)-tyrosine intermediate in catalysis.

It belongs to the 'phage' integrase family. XerC subfamily. Forms a cyclic heterotetrameric complex composed of two molecules of XerC and two molecules of XerD.

The protein localises to the cytoplasm. Functionally, site-specific tyrosine recombinase, which acts by catalyzing the cutting and rejoining of the recombining DNA molecules. The XerC-XerD complex is essential to convert dimers of the bacterial chromosome into monomers to permit their segregation at cell division. It also contributes to the segregational stability of plasmids. In Listeria monocytogenes serovar 1/2a (strain ATCC BAA-679 / EGD-e), this protein is Tyrosine recombinase XerC.